We begin with the raw amino-acid sequence, 385 residues long: Putative mitochondrial carrier protein TRV_02148.2 (385 aa).

Solcar repeat units follow at residues 24–124 and 130–210; these read SNTL…LHAR and RTAG…LRRR. Helical transmembrane passes span 30-47, 132-150, 184-207, 263-279, and 294-310; these read GTAI…DSIL, AGNE…KLFT, WSAY…YLAL, YTIC…LEVI, and VVTV…LYML.

This sequence belongs to the mitochondrial carrier (TC 2.A.29) family.

The protein localises to the mitochondrion inner membrane. Its function is as follows. May function as a mitochondrial transporter. The chain is Putative mitochondrial carrier protein TRV_02148.2 from Trichophyton verrucosum (strain HKI 0517).